The following is a 141-amino-acid chain: Small ribosomal subunit protein bS16 (141 aa).

Residues 84-141 (TRKARSNPEKSKPKAKAQERLEAARMAEEEAAAAAKAAAEAPAEEAPAAEAPAEEAQA) form a disordered region. Basic and acidic residues predominate over residues 89–111 (SNPEKSKPKAKAQERLEAARMAE). Over residues 115–141 (AAAAKAAAEAPAEEAPAAEAPAEEAQA) the composition is skewed to low complexity.

Belongs to the bacterial ribosomal protein bS16 family.

This Parvibaculum lavamentivorans (strain DS-1 / DSM 13023 / NCIMB 13966) protein is Small ribosomal subunit protein bS16.